The following is a 904-amino-acid chain: Translation initiation factor IF-2 (904 aa).

Disordered stretches follow at residues 103–122 (YVKS…PDEE), 137–252 (NLEE…MVAG), and 267–315 (HLSA…FERP). Residues 137-177 (NLEEQQRLAESDRVRDEAIQRKREEEQAAKDRAEAERKAAE) are compositionally biased toward basic and acidic residues. Low complexity-rich tracts occupy residues 178–230 (EAAA…AAPA) and 280–293 (RGKP…SSSR). One can recognise a tr-type G domain in the interval 403–572 (SRPPVVTIMG…SLQAEVLELK (170 aa)). The G1 stretch occupies residues 412 to 419 (GHVDHGKT). A GTP-binding site is contributed by 412–419 (GHVDHGKT). Positions 437-441 (GITQH) are G2. The segment at 458–461 (DTPG) is G3. Residues 458-462 (DTPGH) and 512-515 (NKID) contribute to the GTP site. Residues 512 to 515 (NKID) are G4. Positions 548–550 (SAK) are G5.

The protein belongs to the TRAFAC class translation factor GTPase superfamily. Classic translation factor GTPase family. IF-2 subfamily.

The protein resides in the cytoplasm. In terms of biological role, one of the essential components for the initiation of protein synthesis. Protects formylmethionyl-tRNA from spontaneous hydrolysis and promotes its binding to the 30S ribosomal subunits. Also involved in the hydrolysis of GTP during the formation of the 70S ribosomal complex. This chain is Translation initiation factor IF-2, found in Xanthomonas euvesicatoria pv. vesicatoria (strain 85-10) (Xanthomonas campestris pv. vesicatoria).